Here is a 133-residue protein sequence, read N- to C-terminus: Ribosomal silencing factor RsfS (133 aa).

This sequence belongs to the Iojap/RsfS family. As to quaternary structure, interacts with ribosomal protein uL14 (rplN).

The protein resides in the cytoplasm. Its function is as follows. Functions as a ribosomal silencing factor. Interacts with ribosomal protein uL14 (rplN), blocking formation of intersubunit bridge B8. Prevents association of the 30S and 50S ribosomal subunits and the formation of functional ribosomes, thus repressing translation. The protein is Ribosomal silencing factor RsfS of Zymomonas mobilis subsp. mobilis (strain ATCC 31821 / ZM4 / CP4).